Reading from the N-terminus, the 184-residue chain is ATP synthase subunit b, chloroplastic (184 aa).

Residues 27-49 traverse the membrane as a helical segment; it reads LATNPINLSVVLGVLIFFGKGVL.

It belongs to the ATPase B chain family. In terms of assembly, F-type ATPases have 2 components, F(1) - the catalytic core - and F(0) - the membrane proton channel. F(1) has five subunits: alpha(3), beta(3), gamma(1), delta(1), epsilon(1). F(0) has four main subunits: a(1), b(1), b'(1) and c(10-14). The alpha and beta chains form an alternating ring which encloses part of the gamma chain. F(1) is attached to F(0) by a central stalk formed by the gamma and epsilon chains, while a peripheral stalk is formed by the delta, b and b' chains.

The protein localises to the plastid. It is found in the chloroplast thylakoid membrane. In terms of biological role, f(1)F(0) ATP synthase produces ATP from ADP in the presence of a proton or sodium gradient. F-type ATPases consist of two structural domains, F(1) containing the extramembraneous catalytic core and F(0) containing the membrane proton channel, linked together by a central stalk and a peripheral stalk. During catalysis, ATP synthesis in the catalytic domain of F(1) is coupled via a rotary mechanism of the central stalk subunits to proton translocation. Its function is as follows. Component of the F(0) channel, it forms part of the peripheral stalk, linking F(1) to F(0). This Morus indica (Mulberry) protein is ATP synthase subunit b, chloroplastic.